The sequence spans 666 residues: Protein-arginine deiminase type-4 (666 aa).

The Ca(2+) site is built by Asn153, Asp155, Asp165, Asp168, Asp176, and Asp179. Citrulline is present on residues Arg212 and Arg218. Ca(2+) is bound at residue Gln349. Residue Asp350 is part of the active site. Glu351, Glu353, Asp369, and Ser370 together coordinate Ca(2+). Citrulline is present on residues Arg372, Arg374, and Arg383. Substrate is bound at residue Arg374. 3 residues coordinate Ca(2+): Phe407, Leu410, and Glu411. Catalysis depends on residues His471, Asp473, and Cys648.

This sequence belongs to the protein arginine deiminase family. Ca(2+) serves as cofactor. Post-translationally, autocitrullination at Arg-372 and Arg-374 inactivates the enzyme. In terms of tissue distribution, epidermis.

It localises to the cytoplasm. The protein localises to the nucleus. It is found in the cytoplasmic granule. It catalyses the reaction L-arginyl-[protein] + H2O = L-citrullyl-[protein] + NH4(+). Functionally, catalyzes the citrullination/deimination of arginine residues of proteins such as histones, thereby playing a key role in histone code and regulation of stem cell maintenance. Citrullinates histone H1 at 'Arg-54' (to form H1R54ci), histone H3 at 'Arg-2', 'Arg-8', 'Arg-17' and/or 'Arg-26' (to form H3R2ci, H3R8ci, H3R17ci, H3R26ci, respectively) and histone H4 at 'Arg-3' (to form H4R3ci). Acts as a key regulator of stem cell maintenance by mediating citrullination of histone H1: citrullination of 'Arg-54' of histone H1 (H1R54ci) results in H1 displacement from chromatin and global chromatin decondensation, thereby promoting pluripotency and stem cell maintenance. Promotes profound chromatin decondensation during the innate immune response to infection in neutrophils by mediating formation of H1R54ci. Required for the formation of neutrophil extracellular traps (NETs); NETs are mainly composed of DNA fibers and are released by neutrophils to bind pathogens during inflammation. Citrullination of histone H3 prevents their methylation by CARM1 and HRMT1L2/PRMT1 and represses transcription. Citrullinates EP300/P300 at 'Arg-2142', which favors its interaction with NCOA2/GRIP1. The chain is Protein-arginine deiminase type-4 (Padi4) from Rattus norvegicus (Rat).